The primary structure comprises 385 residues: 1-deoxy-D-xylulose 5-phosphate reductoisomerase 1 (385 aa).

NADPH contacts are provided by Thr11, Gly12, Ser13, Ile14, Asn39, and Asn122. Residue Lys123 participates in 1-deoxy-D-xylulose 5-phosphate binding. Glu124 contacts NADPH. Residue Asp148 participates in Mn(2+) binding. The 1-deoxy-D-xylulose 5-phosphate site is built by Ser149, Glu150, Ser174, and His197. Position 150 (Glu150) interacts with Mn(2+). An NADPH-binding site is contributed by Gly203. Ser210, Asn215, Lys216, and Glu219 together coordinate 1-deoxy-D-xylulose 5-phosphate. Position 219 (Glu219) interacts with Mn(2+).

This sequence belongs to the DXR family. It depends on Mg(2+) as a cofactor. Requires Mn(2+) as cofactor.

It catalyses the reaction 2-C-methyl-D-erythritol 4-phosphate + NADP(+) = 1-deoxy-D-xylulose 5-phosphate + NADPH + H(+). It functions in the pathway isoprenoid biosynthesis; isopentenyl diphosphate biosynthesis via DXP pathway; isopentenyl diphosphate from 1-deoxy-D-xylulose 5-phosphate: step 1/6. In terms of biological role, catalyzes the NADPH-dependent rearrangement and reduction of 1-deoxy-D-xylulose-5-phosphate (DXP) to 2-C-methyl-D-erythritol 4-phosphate (MEP). This is 1-deoxy-D-xylulose 5-phosphate reductoisomerase 1 from Bacillus thuringiensis subsp. konkukian (strain 97-27).